A 591-amino-acid polypeptide reads, in one-letter code: Aspartate--tRNA(Asp/Asn) ligase (591 aa).

An L-aspartate-binding site is contributed by E174. Positions 198 to 201 (QLFK) are aspartate. R220 contacts L-aspartate. ATP contacts are provided by residues 220 to 222 (RDE) and Q229. H450 is an L-aspartate binding site. E483 is a binding site for ATP. R490 provides a ligand contact to L-aspartate. 535-538 (GLDR) is a binding site for ATP.

Belongs to the class-II aminoacyl-tRNA synthetase family. Type 1 subfamily. Homodimer.

The protein resides in the cytoplasm. The enzyme catalyses tRNA(Asx) + L-aspartate + ATP = L-aspartyl-tRNA(Asx) + AMP + diphosphate. Its function is as follows. Aspartyl-tRNA synthetase with relaxed tRNA specificity since it is able to aspartylate not only its cognate tRNA(Asp) but also tRNA(Asn). Reaction proceeds in two steps: L-aspartate is first activated by ATP to form Asp-AMP and then transferred to the acceptor end of tRNA(Asp/Asn). This Pseudomonas savastanoi pv. phaseolicola (strain 1448A / Race 6) (Pseudomonas syringae pv. phaseolicola (strain 1448A / Race 6)) protein is Aspartate--tRNA(Asp/Asn) ligase.